The sequence spans 267 residues: NAD kinase 1 (267 aa).

Asp-45 acts as the Proton acceptor in catalysis. NAD(+) is bound by residues 45-46 (DG), 122-123 (NE), Arg-149, Asp-151, and Ala-186.

This sequence belongs to the NAD kinase family. It depends on a divalent metal cation as a cofactor.

It is found in the cytoplasm. It catalyses the reaction NAD(+) + ATP = ADP + NADP(+) + H(+). Involved in the regulation of the intracellular balance of NAD and NADP, and is a key enzyme in the biosynthesis of NADP. Catalyzes specifically the phosphorylation on 2'-hydroxyl of the adenosine moiety of NAD to yield NADP. The polypeptide is NAD kinase 1 (Oceanobacillus iheyensis (strain DSM 14371 / CIP 107618 / JCM 11309 / KCTC 3954 / HTE831)).